The following is a 531-amino-acid chain: Jacalin-related lectin 16 (531 aa).

4 Jacalin-type lectin domains span residues 1 to 87 (MDRS…YFTW), 90 to 232 (PTKM…YFTT), 235 to 378 (LISL…YFRP), and 385 to 528 (TEKV…NVLP).

It belongs to the jacalin lectin family.

This is Jacalin-related lectin 16 (JAL16) from Arabidopsis thaliana (Mouse-ear cress).